A 237-amino-acid polypeptide reads, in one-letter code: Demethylmenaquinone methyltransferase (237 aa).

S-adenosyl-L-methionine is bound by residues Thr58, Asp79, and 106 to 107; that span reads NA.

This sequence belongs to the class I-like SAM-binding methyltransferase superfamily. MenG/UbiE family.

It carries out the reaction a 2-demethylmenaquinol + S-adenosyl-L-methionine = a menaquinol + S-adenosyl-L-homocysteine + H(+). It participates in quinol/quinone metabolism; menaquinone biosynthesis; menaquinol from 1,4-dihydroxy-2-naphthoate: step 2/2. Methyltransferase required for the conversion of demethylmenaquinol (DMKH2) to menaquinol (MKH2). This is Demethylmenaquinone methyltransferase from Listeria innocua serovar 6a (strain ATCC BAA-680 / CLIP 11262).